We begin with the raw amino-acid sequence, 505 residues long: NADH-quinone oxidoreductase subunit N 1 (505 aa).

14 helical membrane passes run 18–38 (LIPEIALGCLALLLLVVEMVL), 45–65 (LIATIAIIGQFGILGWVAWDF), 84–104 (YVGQAMRVFFLLSSIFVSILA), 116–136 (IEFYHIVLVATAAMMLLAQAN), 138–158 (FVLFFVALETLTVGLYILVSY), 173–193 (LIMGALSSSLLLFGIVLLYGV), 223–243 (FLAAAGIVLVLSGIAFKIGAF), 271–291 (AGFAILLVLVNSVFGPYWWLV), 292–312 (QPVLVAMAVATILFGNIAALT), 319–339 (LIGLSGVSHAGFLLIGIIASH), 345–365 (VGAVLFYLFAYLLATFAVFGV), 391–411 (FLAAILAVALGSLAGIPPLAG), 429–449 (GLLAVAIVGVVISIYYYFGWI), and 473–493 (VGAAAGVALATLALCSILFGV).

The protein belongs to the complex I subunit 2 family. NDH-1 is composed of 14 different subunits. Subunits NuoA, H, J, K, L, M, N constitute the membrane sector of the complex.

Its subcellular location is the cell inner membrane. The enzyme catalyses a quinone + NADH + 5 H(+)(in) = a quinol + NAD(+) + 4 H(+)(out). In terms of biological role, NDH-1 shuttles electrons from NADH, via FMN and iron-sulfur (Fe-S) centers, to quinones in the respiratory chain. The immediate electron acceptor for the enzyme in this species is believed to be ubiquinone. Couples the redox reaction to proton translocation (for every two electrons transferred, four hydrogen ions are translocated across the cytoplasmic membrane), and thus conserves the redox energy in a proton gradient. This Opitutus terrae (strain DSM 11246 / JCM 15787 / PB90-1) protein is NADH-quinone oxidoreductase subunit N 1.